The primary structure comprises 130 residues: HTH-type transcriptional regulator KmtR (130 aa).

Residues 10-104 (LPDDQVCLVV…DAVFNAEHAG (95 aa)) form the HTH arsR-type domain. The H-T-H motif DNA-binding region spans 44 to 67 (VNELAEQVGKPAPSVSQHLAKLRM). The segment at 110–130 (HHRAAGGLQSVAKASATKDVG) is disordered.

Its activity is regulated as follows. Binding to DNA is inhibited by nickel and cobalt ions. Represses expression of Rv2025c and its own expression. Acts by binding to the promoter regions. The sequence is that of HTH-type transcriptional regulator KmtR (kmtR) from Mycobacterium tuberculosis (strain ATCC 25618 / H37Rv).